The primary structure comprises 598 residues: Elongation factor 4 (598 aa).

Positions serine 5–isoleucine 187 constitute a tr-type G domain. GTP is bound by residues aspartate 17 to threonine 22 and asparagine 134 to aspartate 137.

The protein belongs to the TRAFAC class translation factor GTPase superfamily. Classic translation factor GTPase family. LepA subfamily.

Its subcellular location is the cell inner membrane. The catalysed reaction is GTP + H2O = GDP + phosphate + H(+). In terms of biological role, required for accurate and efficient protein synthesis under certain stress conditions. May act as a fidelity factor of the translation reaction, by catalyzing a one-codon backward translocation of tRNAs on improperly translocated ribosomes. Back-translocation proceeds from a post-translocation (POST) complex to a pre-translocation (PRE) complex, thus giving elongation factor G a second chance to translocate the tRNAs correctly. Binds to ribosomes in a GTP-dependent manner. This is Elongation factor 4 from Pseudomonas fluorescens (strain Pf0-1).